Consider the following 743-residue polypeptide: Cap-specific mRNA (nucleoside-2'-O-)-methyltransferase 2 (743 aa).

Residues 113-326 (ELCTQAWAKF…LYIVCLDYQA (214 aa)) enclose the Adrift-type SAM-dependent 2'-O-MTase domain. Lys121 is a catalytic residue. S-adenosyl-L-methionine contacts are provided by Gly152, Trp171, and Asp239. Asp239 is an active-site residue. Lys279 serves as the catalytic Proton acceptor.

Its subcellular location is the nucleus. It is found in the cytoplasm. The enzyme catalyses a 5'-end (N(7)-methyl 5'-triphosphoguanosine)-(2'-O-methyl-ribonucleoside)-(ribonucleotide) in mRNA + S-adenosyl-L-methionine = a 5'-end (N(7)-methyl 5'-triphosphoguanosine)-(2'-O-methyl-ribonucleoside)-(2'-O-methyl-ribonucleotide) in mRNA + S-adenosyl-L-homocysteine + H(+). S-adenosyl-L-methionine-dependent methyltransferase that mediates mRNA cap2 2'-O-ribose methylation to the 5'-cap structure of mRNAs. Methylates the ribose of the second nucleotide of a m(7)GpppG-capped mRNA and small nuclear RNA (snRNA) (cap0) to produce m(7)GpppRmpNm (cap2). The polypeptide is Cap-specific mRNA (nucleoside-2'-O-)-methyltransferase 2 (cmtr2) (Danio rerio (Zebrafish)).